Here is a 465-residue protein sequence, read N- to C-terminus: Na(+)-translocating NADH-quinone reductase subunit A (465 aa).

It belongs to the NqrA family. As to quaternary structure, composed of six subunits; NqrA, NqrB, NqrC, NqrD, NqrE and NqrF.

The enzyme catalyses a ubiquinone + n Na(+)(in) + NADH + H(+) = a ubiquinol + n Na(+)(out) + NAD(+). Its function is as follows. NQR complex catalyzes the reduction of ubiquinone-1 to ubiquinol by two successive reactions, coupled with the transport of Na(+) ions from the cytoplasm to the periplasm. NqrA to NqrE are probably involved in the second step, the conversion of ubisemiquinone to ubiquinol. The sequence is that of Na(+)-translocating NADH-quinone reductase subunit A from Chlamydia trachomatis serovar L2b (strain UCH-1/proctitis).